The following is a 544-amino-acid chain: Esterase-6 (544 aa).

The signal sequence occupies residues 1 to 21 (MNYVGLGLIIVLSCLWLGSNA). Asparagine 42 carries N-linked (GlcNAc...) asparagine glycosylation. A disulfide bridge links cysteine 86 with cysteine 105. Serine 209 serves as the catalytic Acyl-ester intermediate. Cysteines 261 and 273 form a disulfide. Asparagine 420 and asparagine 456 each carry an N-linked (GlcNAc...) asparagine glycan. The active-site Charge relay system is histidine 466. Asparagine 506 carries an N-linked (GlcNAc...) asparagine glycan. The cysteines at positions 514 and 535 are disulfide-linked.

Belongs to the type-B carboxylesterase/lipase family. In terms of assembly, monomer. Specifically expressed in the ejaculatory bulbs of male.

Its subcellular location is the secreted. It carries out the reaction a carboxylic ester + H2O = an alcohol + a carboxylate + H(+). Transferred from the ejaculatory bulbs of males to the female genitals upon copulation, plays an important role in the reproductive biology. This chain is Esterase-6 (Est-6), found in Drosophila melanogaster (Fruit fly).